Here is a 122-residue protein sequence, read N- to C-terminus: Putative syntaxin 6 (122 aa).

Residues 1–100 lie on the Cytoplasmic side of the membrane; that stretch reads MSNYRYSKLN…AKLTHLEDES (100 aa). One can recognise a t-SNARE coiled-coil homology domain in the interval 31-93; it reads EQIIQEQDDE…DTAMKKMAKL (63 aa). The helical; Anchor for type IV membrane protein transmembrane segment at 101 to 121 threads the bilayer; sequence SQCKMIMVLSALLFFLVFVLL. Residue Val122 is a topological domain, extracellular.

The protein belongs to the syntaxin family.

The protein resides in the membrane. Its function is as follows. SNARE promoting movement of transport vesicles to target membranes. Potentially functions in retrograde trafficking and in the endocytic recycling pathway. This chain is Putative syntaxin 6 (syx-6), found in Caenorhabditis elegans.